A 176-amino-acid chain; its full sequence is ATP-dependent protease subunit HslV (176 aa).

The active site involves threonine 2. Na(+) contacts are provided by glycine 158, cysteine 161, and threonine 164.

The protein belongs to the peptidase T1B family. HslV subfamily. A double ring-shaped homohexamer of HslV is capped on each side by a ring-shaped HslU homohexamer. The assembly of the HslU/HslV complex is dependent on binding of ATP.

The protein resides in the cytoplasm. The catalysed reaction is ATP-dependent cleavage of peptide bonds with broad specificity.. Allosterically activated by HslU binding. Its function is as follows. Protease subunit of a proteasome-like degradation complex believed to be a general protein degrading machinery. The sequence is that of ATP-dependent protease subunit HslV from Pasteurella multocida (strain Pm70).